The sequence spans 150 residues: Urease accessory protein UreE (150 aa).

The protein belongs to the UreE family.

It is found in the cytoplasm. In terms of biological role, involved in urease metallocenter assembly. Binds nickel. Probably functions as a nickel donor during metallocenter assembly. This Staphylococcus carnosus (strain TM300) protein is Urease accessory protein UreE.